An 88-amino-acid polypeptide reads, in one-letter code: MANTPSAKKAARKIERRTAVNRARRSRVRTYLRKLEDALTAGNKDAAVAAFKAAEPEIMRAVTKGVLHKNTASRKVSRLAARVRKISA.

The tract at residues 1-25 (MANTPSAKKAARKIERRTAVNRARR) is disordered.

The protein belongs to the bacterial ribosomal protein bS20 family.

Binds directly to 16S ribosomal RNA. The polypeptide is Small ribosomal subunit protein bS20 (Azorhizobium caulinodans (strain ATCC 43989 / DSM 5975 / JCM 20966 / LMG 6465 / NBRC 14845 / NCIMB 13405 / ORS 571)).